We begin with the raw amino-acid sequence, 510 residues long: MTATPKPLVLIILDGFGHSESHEGNAILAAKMPVMDRLYKTMPNGLISGSGMDVGLPDGQMGNSEVGHMNLGAGRVVYQDFTRVTKAIRDGEFFENPTICAAVDKAVSAGKAVHIMGLLSDGGVHSHQDHLVAMAELAVRRGADKIYLHAFLDGRDTPPRSAKKSLELMDETFARLGKGRIATIIGRYFAMDRDNRWDRVSTAYNLIVDSSAEFHAATGVAGLEAAYARDENDEFVKATRIGEPANVEDGDAVVFMNFRADRARELTRVFVEDDFKDFERARQPKVNYVMLTQYAASIPAPSAFAAGSLKNVLGEYLADNGKTQLRIAETEKYAHVTFFFSGGREEPFPGEERILIPSPKVATYDLQPEMSAPEVTDKIVDAIEHQRYDVIIVNYANGDMVGHSGIMEAAIKAVEYLDVCVGRITDALEKVGGEALITADHGNVEQMTDDATGQAHTAHTSEPVPFVYVGKRQLKVREGGVLADVAPTMLQLLGMEKPQEMTGHSILVEE.

Mn(2+) contacts are provided by D14 and S64. S64 (phosphoserine intermediate) is an active-site residue. Substrate-binding positions include H125, 155–156 (RD), R187, R193, 259–262 (RADR), and K332. D399, H403, D440, H441, and H459 together coordinate Mn(2+).

It belongs to the BPG-independent phosphoglycerate mutase family. In terms of assembly, monomer. It depends on Mn(2+) as a cofactor.

The catalysed reaction is (2R)-2-phosphoglycerate = (2R)-3-phosphoglycerate. It participates in carbohydrate degradation; glycolysis; pyruvate from D-glyceraldehyde 3-phosphate: step 3/5. In terms of biological role, catalyzes the interconversion of 2-phosphoglycerate and 3-phosphoglycerate. Essential for the growth and pathogenicity on the host plant. This chain is 2,3-bisphosphoglycerate-independent phosphoglycerate mutase, found in Pseudomonas syringae pv. tomato (strain ATCC BAA-871 / DC3000).